The chain runs to 363 residues: uncharacterized protein (363 aa).

Belongs to the TelA family.

This is an uncharacterized protein from Bacillus subtilis (strain 168).